Reading from the N-terminus, the 101-residue chain is Urease subunit beta (101 aa).

This sequence belongs to the urease beta subunit family. Heterotrimer of UreA (gamma), UreB (beta) and UreC (alpha) subunits. Three heterotrimers associate to form the active enzyme.

The protein resides in the cytoplasm. It carries out the reaction urea + 2 H2O + H(+) = hydrogencarbonate + 2 NH4(+). Its pathway is nitrogen metabolism; urea degradation; CO(2) and NH(3) from urea (urease route): step 1/1. In Sinorhizobium fredii (strain NBRC 101917 / NGR234), this protein is Urease subunit beta.